The sequence spans 192 residues: NF-kappa-B inhibitor-interacting Ras-like protein 1 (192 aa).

11-18 (GLLSVGKT) is a GTP binding site. An Effector region motif is present at residues 35–43 (DCETMEDVY). The interval 58-93 (HLYDTRGLQEGVELPKHYFSFADGFVLVYSVNNLES) is interactions with NFKBIA and NFKBIB. Residues 61–65 (DTRGL) and 120–123 (NKID) contribute to the GTP site. Residues 168-192 (LSQPQSKSSFPLPGRKNKGNSSSEN) are disordered.

It belongs to the small GTPase superfamily. Ras family. KappaB-Ras subfamily. In terms of assembly, interacts with both NF-kappa-B inhibitor alpha (NFKBIA) and beta (NFKBIB) in vitro. However, it probably only interacts with NFKBIB in vivo. Forms a complex with NFKBIB and NF-kappa-B heterodimer (p50/NFKB1 and p65/RELA). Also interacts with c-Rel (REL).

It localises to the cytoplasm. Functionally, atypical Ras-like protein that acts as a potent regulator of NF-kappa-B activity by preventing the degradation of NF-kappa-B inhibitor beta (NFKBIB) by most signals, explaining why NFKBIB is more resistant to degradation. May act by blocking phosphorylation of NFKBIB and mediating cytoplasmic retention of p65/RELA NF-kappa-B subunit. It is unclear whether it acts as a GTPase. Both GTP- and GDP-bound forms block phosphorylation of NFKBIB. This chain is NF-kappa-B inhibitor-interacting Ras-like protein 1 (NKIRAS1), found in Macaca fascicularis (Crab-eating macaque).